Reading from the N-terminus, the 575-residue chain is Melatonin-related receptor (575 aa).

Over 1 to 30 (MGRTLAVPTPYGCIGCKLPQPDYPPALIVF) the chain is Extracellular. The chain crosses the membrane as a helical span at residues 31-51 (MFCAMVITIVVDLIGNSMVIL). Residues 52–64 (AVSKNKKLRNSGN) are Cytoplasmic-facing. Residues 65-85 (VFVVSLSVADMLVAIYPYPLM) traverse the membrane as a helical segment. Over 86 to 103 (LHAMAIGGWDLSKLQCQM) the chain is Extracellular. A disulfide bridge connects residues Cys-101 and Cys-178. A helical transmembrane segment spans residues 104-124 (VGFITGLSVVGSIFNIMAIAI). The Cytoplasmic segment spans residues 125 to 143 (NRYCYICHSLQYERIFSVR). The helical transmembrane segment at 144–164 (NTCIYLAVTWIMTVLAVLPNM) threads the bilayer. Residues 165 to 188 (YIGTIEYDPRTYTCIFNYVNNPAF) are Extracellular-facing. The chain crosses the membrane as a helical span at residues 189–209 (AVTIVCIHFVLPLLIVGFCYV). Residues 210-239 (KIWTKVLAARDPAGQNPDNQLAEVRNFLTM) lie on the Cytoplasmic side of the membrane. A helical membrane pass occupies residues 240-260 (FVIFLLFAVCWCPINALTVLV). The Extracellular portion of the chain corresponds to 261 to 273 (AVNPKEMAGKIPN). The helical transmembrane segment at 274–294 (WVYLAAYFIAYFNSCLNAVIY) threads the bilayer. Over 295–575 (GVLNENFRRE…VDADSDEMAV (281 aa)) the chain is Cytoplasmic. 2 disordered regions span residues 368-421 (VPLP…TVYP) and 446-474 (SSHP…TGYT). A compositionally biased stretch (polar residues) spans 455–474 (PSKTAISPATSFPKPTTGYT).

It belongs to the G-protein coupled receptor 1 family. In terms of assembly, homodimer, and heterodimer with MTNR1A and MTNR1B. Interacts with KAT5. Interacts with RTN4 isoform A/NOGO-A. Interacts with TGFBR1.

The protein localises to the cell membrane. Its function is as follows. G protein-coupled receptor that plays a role in numerous physiological processes including regulation of energy metabolism, neurite outgrowth or cell migration. Promotes self-renewal and neuronal differentiation of neural progenitor cells through activation of the NOTCH and WNT/beta-catenin signaling pathways. Modulates the KAT5-dependent glucocorticoid receptor signaling by modulating KAT5 subcellular compartmentalisation. Also plays a role in the activation TGFBR1 in the absence of TGFBR2 by interfering with FKBP1A binding to TGFBR1, leading to induction of both canonical and non-canonical SMAD signaling pathways resulting in inhibition of proliferation or promotion of migration. In Ovis aries (Sheep), this protein is Melatonin-related receptor (GPR50).